The chain runs to 259 residues: GDP-perosamine N-formyltransferase (259 aa).

(6S)-5,6,7,8-tetrahydrofolate contacts are provided by residues 89 to 91 (SLI) and 139 to 143 (DENFD).

Belongs to the Fmt family. As to quaternary structure, homodimer.

It catalyses the reaction GDP-alpha-D-perosamine + (6R)-10-formyltetrahydrofolate = GDP-N-formyl-alpha-D-perosamine + (6S)-5,6,7,8-tetrahydrofolate + H(+). The protein operates within bacterial outer membrane biogenesis; lipopolysaccharide biosynthesis. Its function is as follows. Involved in the lipopolysaccharide (LPS) O-antigen biosynthesis. Catalyzes the transfer of a formyl group to GDP-perosamine, leading to the formation of GDP-N-formylperosamine. Is critical for full bacterial virulence. This Brucella abortus (strain 2308) protein is GDP-perosamine N-formyltransferase.